The following is a 400-amino-acid chain: Exodeoxyribonuclease 7 large subunit (400 aa).

This sequence belongs to the XseA family. As to quaternary structure, heterooligomer composed of large and small subunits.

The protein resides in the cytoplasm. It carries out the reaction Exonucleolytic cleavage in either 5'- to 3'- or 3'- to 5'-direction to yield nucleoside 5'-phosphates.. In terms of biological role, bidirectionally degrades single-stranded DNA into large acid-insoluble oligonucleotides, which are then degraded further into small acid-soluble oligonucleotides. This Clostridium perfringens (strain SM101 / Type A) protein is Exodeoxyribonuclease 7 large subunit.